A 153-amino-acid chain; its full sequence is Alpha-amylase type B isozyme (153 aa).

Substrate-binding positions include lysine 19, 25–27 (GWW), histidine 38, glutamine 44, lysine 123, and tryptophan 150.

Belongs to the glycosyl hydrolase 13 family. In terms of assembly, monomer. The cofactor is Ca(2+).

The enzyme catalyses Endohydrolysis of (1-&gt;4)-alpha-D-glucosidic linkages in polysaccharides containing three or more (1-&gt;4)-alpha-linked D-glucose units.. In Hordeum vulgare (Barley), this protein is Alpha-amylase type B isozyme (AMY1.4).